Reading from the N-terminus, the 207-residue chain is Probable GTP-binding protein EngB (207 aa).

The 176-residue stretch at 24–199 (GGYEVAFAGR…RAIVGAWLGL (176 aa)) folds into the EngB-type G domain. Residues 32-39 (GRSNAGKS), 59-63 (GRTQQ), 77-80 (DLPG), 144-147 (TKAD), and 178-180 (YSG) contribute to the GTP site. Positions 39 and 61 each coordinate Mg(2+).

It belongs to the TRAFAC class TrmE-Era-EngA-EngB-Septin-like GTPase superfamily. EngB GTPase family. It depends on Mg(2+) as a cofactor.

Functionally, necessary for normal cell division and for the maintenance of normal septation. This Xanthomonas euvesicatoria pv. vesicatoria (strain 85-10) (Xanthomonas campestris pv. vesicatoria) protein is Probable GTP-binding protein EngB.